Reading from the N-terminus, the 271-residue chain is 4-hydroxy-tetrahydrodipicolinate reductase (271 aa).

Residues 11-16 (GGSGRM) and Glu-37 each bind NAD(+). Arg-38 lines the NADP(+) pocket. NAD(+) is bound by residues 101 to 103 (GTT) and 125 to 128 (APNM). The Proton donor/acceptor role is filled by His-158. (S)-2,3,4,5-tetrahydrodipicolinate is bound at residue His-159. Residue Lys-162 is the Proton donor of the active site. 168–169 (GT) contributes to the (S)-2,3,4,5-tetrahydrodipicolinate binding site.

It belongs to the DapB family.

The protein localises to the cytoplasm. The catalysed reaction is (S)-2,3,4,5-tetrahydrodipicolinate + NAD(+) + H2O = (2S,4S)-4-hydroxy-2,3,4,5-tetrahydrodipicolinate + NADH + H(+). It catalyses the reaction (S)-2,3,4,5-tetrahydrodipicolinate + NADP(+) + H2O = (2S,4S)-4-hydroxy-2,3,4,5-tetrahydrodipicolinate + NADPH + H(+). It functions in the pathway amino-acid biosynthesis; L-lysine biosynthesis via DAP pathway; (S)-tetrahydrodipicolinate from L-aspartate: step 4/4. Its function is as follows. Catalyzes the conversion of 4-hydroxy-tetrahydrodipicolinate (HTPA) to tetrahydrodipicolinate. This is 4-hydroxy-tetrahydrodipicolinate reductase from Shewanella piezotolerans (strain WP3 / JCM 13877).